The following is a 229-amino-acid chain: Urease accessory protein UreF (229 aa).

Belongs to the UreF family. UreD, UreF and UreG form a complex that acts as a GTP-hydrolysis-dependent molecular chaperone, activating the urease apoprotein by helping to assemble the nickel containing metallocenter of UreC. The UreE protein probably delivers the nickel.

The protein resides in the cytoplasm. Required for maturation of urease via the functional incorporation of the urease nickel metallocenter. This Staphylococcus epidermidis (strain ATCC 35984 / DSM 28319 / BCRC 17069 / CCUG 31568 / BM 3577 / RP62A) protein is Urease accessory protein UreF.